A 184-amino-acid chain; its full sequence is Ras-related protein Rap1 (184 aa).

Residue 10-17 coordinates GTP; it reads GSGGVGKS. An Effector region motif is present at residues 32–40; that stretch reads YDPTIEDSY. GTP is bound by residues 57 to 61 and 116 to 119; these read DTAGT and NKCD. Cysteine 181 carries the cysteine methyl ester modification. Cysteine 181 is lipidated: S-geranylgeranyl cysteine. Residues 182–184 constitute a propeptide, removed in mature form; it reads VLL.

The protein belongs to the small GTPase superfamily. Ras family.

The protein resides in the cell membrane. It catalyses the reaction GTP + H2O = GDP + phosphate + H(+). Alternates between an inactive form bound to GDP and an active form bound to GTP. Activated by a guanine nucleotide-exchange factor (GEF) and inactivated by a GTPase-activating protein (GAP). Its function is as follows. Ras proteins bind GDP/GTP and possess intrinsic GTPase activity. Plays a role in photoreceptor cell determination. In Drosophila melanogaster (Fruit fly), this protein is Ras-related protein Rap1.